The primary structure comprises 155 residues: Small ribosomal subunit protein uS7c (155 aa).

The protein belongs to the universal ribosomal protein uS7 family. In terms of assembly, part of the 30S ribosomal subunit.

It is found in the plastid. Its subcellular location is the chloroplast. In terms of biological role, one of the primary rRNA binding proteins, it binds directly to 16S rRNA where it nucleates assembly of the head domain of the 30S subunit. The polypeptide is Small ribosomal subunit protein uS7c (rps7) (Houttuynia cordata (Chameleon plant)).